Here is a 343-residue protein sequence, read N- to C-terminus: Sodium/bile acid cotransporter 7-B (343 aa).

Over 1 to 9 (MGLLERLRK) the chain is Cytoplasmic. Residues 10 to 30 (EWFIIGIILVIVAAKLEPTIG) traverse the membrane as a helical segment. The Extracellular portion of the chain corresponds to 31–37 (EKGGPLK). The helical transmembrane segment at 38-58 (PEITITYIAVSAIFFNSGLSL) threads the bilayer. At 59–71 (KTEELTNALMHVK) the chain is on the cytoplasmic side. Residues 72–92 (LHLFVQLFTLVFFPTAIWIFL) form a helical membrane-spanning segment. Residues 93 to 116 (QVLSLTPINEWLLKGLQTVSCMPP) lie on the Extracellular side of the membrane. The helical transmembrane segment at 117–137 (PVSSAVILTKAVGGNEAAAIF) threads the bilayer. N138 is a topological domain (cytoplasmic). The chain crosses the membrane as a helical span at residues 139-159 (SAFGSFLGIVVTPLLLLLFLG). The Extracellular segment spans residues 160–163 (SSSS). A helical membrane pass occupies residues 164 to 184 (VPFTSIFSQLFMTVVVPLIIG). The Cytoplasmic segment spans residues 185–201 (QIVRRYIKDWLERKKPP). The chain crosses the membrane as a helical span at residues 202 to 222 (FGAISSCVLLMIIYTTFCDTF). The Extracellular segment spans residues 223–234 (SNPNIDLDTFSL). Residues 235 to 255 (VVIVFIIFFIQLAFMLLTFLF) traverse the membrane as a helical segment. At 256–270 (STSKNSGFTPADTVA) the chain is on the cytoplasmic side. A helical transmembrane segment spans residues 271 to 291 (IVFCSTHKSLTLGIPMLKIVF). The Extracellular segment spans residues 292–298 (AGYEHLS). A helical transmembrane segment spans residues 299–319 (LISVPLLIYHPAQILLGSVLV). Residues 320–343 (PTIKSWMLSRRKALKLTRQPKIPL) lie on the Cytoplasmic side of the membrane.

It belongs to the bile acid:sodium symporter (BASS) (TC 2.A.28) family.

It is found in the cell membrane. Its subcellular location is the endoplasmic reticulum membrane. The protein localises to the golgi apparatus membrane. In terms of biological role, involved in teeth and skeletal development. Has an essential role in the biosynthesis and trafficking of glycosaminoglycans and glycoproteins to produce a proper functioning extracellular matrix. Required for extracellular matrix mineralization. Also involved in the regulation of cellular calcium homeostasis. Does not show transport activity towards bile acids or steroid sulfates. This chain is Sodium/bile acid cotransporter 7-B (slc10a7-b), found in Xenopus laevis (African clawed frog).